The chain runs to 168 residues: Endoribonuclease YbeY (168 aa).

Zn(2+) is bound by residues His126, His130, and His136.

Belongs to the endoribonuclease YbeY family. The cofactor is Zn(2+).

Its subcellular location is the cytoplasm. Its function is as follows. Single strand-specific metallo-endoribonuclease involved in late-stage 70S ribosome quality control and in maturation of the 3' terminus of the 16S rRNA. The sequence is that of Endoribonuclease YbeY from Sinorhizobium medicae (strain WSM419) (Ensifer medicae).